A 704-amino-acid polypeptide reads, in one-letter code: Elongation factor G 1 (704 aa).

Positions 8–291 (ERYRNIGISA…AVIDYLPSPA (284 aa)) constitute a tr-type G domain. Residues 17-24 (AHIDAGKT), 88-92 (DTPGH), and 142-145 (NKMD) contribute to the GTP site.

Belongs to the TRAFAC class translation factor GTPase superfamily. Classic translation factor GTPase family. EF-G/EF-2 subfamily.

It localises to the cytoplasm. Its function is as follows. Catalyzes the GTP-dependent ribosomal translocation step during translation elongation. During this step, the ribosome changes from the pre-translocational (PRE) to the post-translocational (POST) state as the newly formed A-site-bound peptidyl-tRNA and P-site-bound deacylated tRNA move to the P and E sites, respectively. Catalyzes the coordinated movement of the two tRNA molecules, the mRNA and conformational changes in the ribosome. The sequence is that of Elongation factor G 1 from Burkholderia thailandensis (strain ATCC 700388 / DSM 13276 / CCUG 48851 / CIP 106301 / E264).